A 122-amino-acid chain; its full sequence is Large ribosomal subunit protein uL14c (122 aa).

The protein belongs to the universal ribosomal protein uL14 family. Part of the 50S ribosomal subunit.

The protein localises to the plastid. It is found in the chloroplast. Its function is as follows. Binds to 23S rRNA. In Vitis vinifera (Grape), this protein is Large ribosomal subunit protein uL14c.